We begin with the raw amino-acid sequence, 301 residues long: uncharacterized protein (301 aa).

The first 25 residues, 1–25 (MKFKNTLSIFKILIILFSFYNVAFS), serve as a signal peptide directing secretion. The Extracellular segment spans residues 26–279 (DDTEKYTFKG…STTGSKDSST (254 aa)). A disordered region spans residues 174 to 281 (LYTGSSNTPN…TGSKDSSTGN (108 aa)). N191, N212, N234, and N241 each carry an N-linked (GlcNAc...) asparagine glycan. Positions 204-234 (SSSDSTNSNSSSTDTASSSPSSSPSSSPSPN) are enriched in low complexity. Low complexity predominate over residues 254-281 (GGVETSTAGSSTGTTSSTTGSKDSSTGN). A helical membrane pass occupies residues 280–300 (GNSILPTLIIVTFFVLTLVIM). A topological domain (cytoplasmic) is located at residue S301.

It localises to the membrane. This is an uncharacterized protein from Dictyostelium discoideum (Social amoeba).